The chain runs to 187 residues: Elongation factor P (187 aa).

This sequence belongs to the elongation factor P family.

It is found in the cytoplasm. The protein operates within protein biosynthesis; polypeptide chain elongation. Functionally, involved in peptide bond synthesis. Stimulates efficient translation and peptide-bond synthesis on native or reconstituted 70S ribosomes in vitro. Probably functions indirectly by altering the affinity of the ribosome for aminoacyl-tRNA, thus increasing their reactivity as acceptors for peptidyl transferase. The chain is Elongation factor P from Corynebacterium kroppenstedtii (strain DSM 44385 / JCM 11950 / CIP 105744 / CCUG 35717).